Reading from the N-terminus, the 306-residue chain is Abnormal cell migration protein 21 (306 aa).

2 TSP type-1 domains span residues 55–102 (PGGW…AISS) and 109–155 (FGSW…DECP). Residues W58 and W61 are each glycosylated (C-linked (Man) tryptophan). Intrachain disulfides connect C121/C149, C123/C154, and C134/C139. The chain crosses the membrane as a helical span at residues 240–260 (CLPLHFAIPIFCFCILTGFLL).

Glycosylated via C-mannosylation by dpy-19 at Trp-58 and Trp-61.

Its subcellular location is the membrane. Functionally, required for determination of left/right asymmetry in nervous system. Acts together with unc-40 to control an initial left-right asymmetric polarization of the Q neuroblasts. Mig-21 and unc-40 may control the asymmetry in Wnt signaling response by restricting posterior polarization to one of the 2 Q neuroblasts. Involved in left-side QL posterior migration. In right-side QR, unc-40 and mig-21 pathways mutually inhibit each other in posterior migration, allowing anterior QR migration. The chain is Abnormal cell migration protein 21 (mig-21) from Caenorhabditis elegans.